A 497-amino-acid polypeptide reads, in one-letter code: Glucose-6-phosphate 1-dehydrogenase (497 aa).

NADP(+) is bound by residues 17-24, R51, and K151; that span reads GASGDLAK. Residues K151, 181–185, E219, and D238 contribute to the D-glucose 6-phosphate site; that span reads HYLGK. H243 (proton acceptor) is an active-site residue. K334 serves as a coordination point for NADP(+). D-glucose 6-phosphate-binding residues include K337 and R342. Positions 343, 347, and 371 each coordinate NADP(+). Q373 provides a ligand contact to D-glucose 6-phosphate. Residues 379–381, 399–401, R465, and W487 contribute to the NADP(+) site; these read YLK and DLS.

The protein belongs to the glucose-6-phosphate dehydrogenase family.

It localises to the cytoplasm. It is found in the cytosol. It catalyses the reaction D-glucose 6-phosphate + NADP(+) = 6-phospho-D-glucono-1,5-lactone + NADPH + H(+). It functions in the pathway carbohydrate degradation; pentose phosphate pathway; D-ribulose 5-phosphate from D-glucose 6-phosphate (oxidative stage): step 1/3. Cytosolic glucose-6-phosphate dehydrogenase that catalyzes the first and rate-limiting step of the oxidative branch within the pentose phosphate pathway/shunt, an alternative route to glycolysis for the dissimilation of carbohydrates and a major source of reducing power and metabolic intermediates for fatty acid and nucleic acid biosynthetic processes. The protein is Glucose-6-phosphate 1-dehydrogenase (g6pd-1) of Dictyostelium discoideum (Social amoeba).